The following is a 204-amino-acid chain: Large ribosomal subunit protein eL15 (204 aa).

Disordered regions lie at residues Arg71 to Gln91 and Arg159 to Gln182. Basic residues predominate over residues Arg159 to Leu174.

This sequence belongs to the eukaryotic ribosomal protein eL15 family.

The sequence is that of Large ribosomal subunit protein eL15 (RPL15) from Faxonius limosus (Spinycheek crayfish).